The following is a 253-amino-acid chain: Indole-3-glycerol phosphate synthase (253 aa).

Belongs to the TrpC family.

It catalyses the reaction 1-(2-carboxyphenylamino)-1-deoxy-D-ribulose 5-phosphate + H(+) = (1S,2R)-1-C-(indol-3-yl)glycerol 3-phosphate + CO2 + H2O. It participates in amino-acid biosynthesis; L-tryptophan biosynthesis; L-tryptophan from chorismate: step 4/5. The sequence is that of Indole-3-glycerol phosphate synthase from Bacillus mycoides (strain KBAB4) (Bacillus weihenstephanensis).